Consider the following 141-residue polypeptide: Large ribosomal subunit protein uL11 (141 aa).

The protein belongs to the universal ribosomal protein uL11 family. In terms of assembly, part of the ribosomal stalk of the 50S ribosomal subunit. Interacts with L10 and the large rRNA to form the base of the stalk. L10 forms an elongated spine to which L12 dimers bind in a sequential fashion forming a multimeric L10(L12)X complex. One or more lysine residues are methylated.

Its function is as follows. Forms part of the ribosomal stalk which helps the ribosome interact with GTP-bound translation factors. This is Large ribosomal subunit protein uL11 from Clostridium kluyveri (strain ATCC 8527 / DSM 555 / NBRC 12016 / NCIMB 10680 / K1).